A 466-amino-acid polypeptide reads, in one-letter code: Arginine biosynthesis bifunctional protein ArgJ, mitochondrial (466 aa).

Substrate-binding residues include Thr-194, Lys-223, Thr-234, Glu-321, Asn-461, and Thr-466. Thr-234 serves as the catalytic Nucleophile.

This sequence belongs to the ArgJ family. In terms of assembly, heterodimer of an alpha and a beta chain. In terms of processing, the alpha and beta chains are autoproteolytically processed from a single precursor protein within the mitochondrion.

It is found in the mitochondrion matrix. It carries out the reaction N(2)-acetyl-L-ornithine + L-glutamate = N-acetyl-L-glutamate + L-ornithine. It catalyses the reaction L-glutamate + acetyl-CoA = N-acetyl-L-glutamate + CoA + H(+). Its pathway is amino-acid biosynthesis; L-arginine biosynthesis; L-ornithine and N-acetyl-L-glutamate from L-glutamate and N(2)-acetyl-L-ornithine (cyclic): step 1/1. It participates in amino-acid biosynthesis; L-arginine biosynthesis; N(2)-acetyl-L-ornithine from L-glutamate: step 1/4. Catalyzes two activities which are involved in the cyclic version of arginine biosynthesis: the synthesis of acetylglutamate from glutamate and acetyl-CoA, and of ornithine by transacetylation between acetylornithine and glutamate. In Aspergillus fumigatus (strain ATCC MYA-4609 / CBS 101355 / FGSC A1100 / Af293) (Neosartorya fumigata), this protein is Arginine biosynthesis bifunctional protein ArgJ, mitochondrial.